The sequence spans 99 residues: Leydig cell tumor 10 kDa protein homolog (99 aa).

Residues 1-36 are disordered; that stretch reads MAQGQRKFQAHKPAKSKTAAAASEKNRGPRKGGRVI.

Belongs to the UPF0390 family.

In terms of biological role, may have a potential role in hypercalcemia of malignancy. The sequence is that of Leydig cell tumor 10 kDa protein homolog (C19orf53) from Homo sapiens (Human).